The primary structure comprises 176 residues: Large ribosomal subunit protein uL10 (176 aa).

The protein belongs to the universal ribosomal protein uL10 family. As to quaternary structure, part of the ribosomal stalk of the 50S ribosomal subunit. The N-terminus interacts with L11 and the large rRNA to form the base of the stalk. The C-terminus forms an elongated spine to which L12 dimers bind in a sequential fashion forming a multimeric L10(L12)X complex.

In terms of biological role, forms part of the ribosomal stalk, playing a central role in the interaction of the ribosome with GTP-bound translation factors. This Mycobacteroides abscessus (strain ATCC 19977 / DSM 44196 / CCUG 20993 / CIP 104536 / JCM 13569 / NCTC 13031 / TMC 1543 / L948) (Mycobacterium abscessus) protein is Large ribosomal subunit protein uL10.